The following is a 183-amino-acid chain: ATP synthase subunit b, chloroplastic (183 aa).

A helical transmembrane segment spans residues 33 to 51 (IINLSVVIGVVVSFGGDAL).

The protein belongs to the ATPase B chain family. In terms of assembly, F-type ATPases have 2 components, F(1) - the catalytic core - and F(0) - the membrane proton channel. F(1) has five subunits: alpha(3), beta(3), gamma(1), delta(1), epsilon(1). F(0) has four main subunits: a(1), b(1), b'(1) and c(10-14). The alpha and beta chains form an alternating ring which encloses part of the gamma chain. F(1) is attached to F(0) by a central stalk formed by the gamma and epsilon chains, while a peripheral stalk is formed by the delta, b and b' chains.

Its subcellular location is the plastid. The protein localises to the chloroplast thylakoid membrane. In terms of biological role, f(1)F(0) ATP synthase produces ATP from ADP in the presence of a proton or sodium gradient. F-type ATPases consist of two structural domains, F(1) containing the extramembraneous catalytic core and F(0) containing the membrane proton channel, linked together by a central stalk and a peripheral stalk. During catalysis, ATP synthesis in the catalytic domain of F(1) is coupled via a rotary mechanism of the central stalk subunits to proton translocation. Functionally, component of the F(0) channel, it forms part of the peripheral stalk, linking F(1) to F(0). This is ATP synthase subunit b, chloroplastic from Oltmannsiellopsis viridis (Marine flagellate).